A 682-amino-acid chain; its full sequence is uncharacterized protein (682 aa).

In terms of domain architecture, MCM spans 284 to 487 (VVNILADRLI…KDKDIAEYIV (204 aa)). Residue 329–336 (TDPGIGKT) participates in ATP binding.

This sequence belongs to the MCM family.

This is an uncharacterized protein from Methanocaldococcus jannaschii (strain ATCC 43067 / DSM 2661 / JAL-1 / JCM 10045 / NBRC 100440) (Methanococcus jannaschii).